Here is a 368-residue protein sequence, read N- to C-terminus: 4-hydroxy-3-methylbut-2-en-1-yl diphosphate synthase (flavodoxin) (368 aa).

[4Fe-4S] cluster contacts are provided by Cys268, Cys271, Cys303, and Glu310.

This sequence belongs to the IspG family. It depends on [4Fe-4S] cluster as a cofactor.

It carries out the reaction (2E)-4-hydroxy-3-methylbut-2-enyl diphosphate + oxidized [flavodoxin] + H2O + 2 H(+) = 2-C-methyl-D-erythritol 2,4-cyclic diphosphate + reduced [flavodoxin]. The protein operates within isoprenoid biosynthesis; isopentenyl diphosphate biosynthesis via DXP pathway; isopentenyl diphosphate from 1-deoxy-D-xylulose 5-phosphate: step 5/6. In terms of biological role, converts 2C-methyl-D-erythritol 2,4-cyclodiphosphate (ME-2,4cPP) into 1-hydroxy-2-methyl-2-(E)-butenyl 4-diphosphate. In Listeria monocytogenes serovar 1/2a (strain ATCC BAA-679 / EGD-e), this protein is 4-hydroxy-3-methylbut-2-en-1-yl diphosphate synthase (flavodoxin).